The sequence spans 475 residues: Erythroid membrane-associated protein (475 aa).

A signal peptide spans 1–29 (MEMASSAGSWLSGCLIPLVFLRLSVHVSG). Positions 30 to 140 (HAGDAGKFHV…GNLSKEDTVI (111 aa)) constitute an Ig-like V-type domain. Residues 30-155 (HAGDAGKFHV…PSVGSLSPSA (126 aa)) lie on the Extracellular side of the membrane. Residues Cys50 and Cys126 are joined by a disulfide bond. N-linked (GlcNAc...) asparagine glycosylation is present at Asn132. Residues 156–176 (VALAVILPVLVLLIMVCLCLI) traverse the membrane as a helical segment. Residues 177–475 (WKQRRAKEKL…ALQELKAPSF (299 aa)) lie on the Cytoplasmic side of the membrane. Positions 220–418 (KLKRAAANSG…LVICSELHKS (199 aa)) constitute a B30.2/SPRY domain. Position 418 is a phosphoserine (Ser418).

This sequence belongs to the immunoglobulin superfamily. BTN/MOG family. Glycosylated. In terms of tissue distribution, expressed in erythroid-enriched bone marrow (at protein level). Highly expressed in bone marrow and to a lower extent in leukocytes, thymus, lymph node and spleen.

The protein localises to the cell membrane. It is found in the cytoplasm. Its function is as follows. Possible role as a cell-adhesion or receptor molecule of erythroid cells. In Homo sapiens (Human), this protein is Erythroid membrane-associated protein (ERMAP).